The primary structure comprises 334 residues: Formylmethanofuran--tetrahydromethanopterin formyltransferase (334 aa).

It belongs to the FTR family. In terms of assembly, homotetramer.

It localises to the cytoplasm. It carries out the reaction N-formylmethanofuran + 5,6,7,8-tetrahydromethanopterin + H(+) = N(5)-formyl-5,6,7,8-tetrahydromethanopterin + methanofuran. Its pathway is one-carbon metabolism; formaldehyde degradation; formate from formaldehyde (H(4)MPT route): step 4/5. Catalyzes the transfer of a formyl group from 5-formyl tetrahydromethanopterin (5-formyl-H(4)MPT) to methanofuran (MFR) to produce formylmethanofuran (formyl-MFR) and tetrahydromethanopterin (H(4)MPT). The protein is Formylmethanofuran--tetrahydromethanopterin formyltransferase of Rhodopirellula baltica (strain DSM 10527 / NCIMB 13988 / SH1).